The sequence spans 333 residues: Prenyltransferase stbC (333 aa).

8 helical membrane passes run 74–94, 125–145, 147–164, 173–193, 201–221, 247–267, 272–292, and 304–324; these read VAFQ…AGCA, ANIF…PLPA, CQRL…YPFC, VILG…AGLP, VPTI…DVVY, ILLT…GVLV, YFFV…IGGI, and SGWF…IEYL.

It belongs to the UbiA prenyltransferase family.

The protein resides in the membrane. The catalysed reaction is orsellinate + (2E,6E)-farnesyl diphosphate = ilicicolinate B + diphosphate. It functions in the pathway secondary metabolite biosynthesis; terpenoid biosynthesis. Prenyltransferase; part of the cluster that mediates the biosynthesis of LL-Z1272-beta, also known as ilicicolin B, a prenylated aryl-aldehyde produced by several fungi and that serves as a key pathway intermediate for many fungal meroterpenoids. The first step in the pathway is performed by the non-reducing polyketide synthase stbA that produces orsellinic acid by condensing acetyl-CoA with 3 malonyl-CoA units. The prenyltransferase stbC then prenylates orsenilic acid into grifolic acid. Finally, grifolic acid is reduced to ilicicolin B by the NRPS-like protein stbB. In Stachybotrys bisbyi (Hyalostachybotrys bisbyi), this protein is Prenyltransferase stbC.